A 426-amino-acid polypeptide reads, in one-letter code: Enolase (426 aa).

Gln-162 contacts (2R)-2-phosphoglycerate. Glu-204 serves as the catalytic Proton donor. Mg(2+) contacts are provided by Asp-241, Glu-284, and Asp-311. Residues Lys-336, Arg-365, Ser-366, and Lys-387 each coordinate (2R)-2-phosphoglycerate. The Proton acceptor role is filled by Lys-336.

It belongs to the enolase family. As to quaternary structure, component of the RNA degradosome, a multiprotein complex involved in RNA processing and mRNA degradation. Mg(2+) is required as a cofactor.

Its subcellular location is the cytoplasm. It is found in the secreted. The protein localises to the cell surface. It catalyses the reaction (2R)-2-phosphoglycerate = phosphoenolpyruvate + H2O. It participates in carbohydrate degradation; glycolysis; pyruvate from D-glyceraldehyde 3-phosphate: step 4/5. Catalyzes the reversible conversion of 2-phosphoglycerate (2-PG) into phosphoenolpyruvate (PEP). It is essential for the degradation of carbohydrates via glycolysis. The polypeptide is Enolase (Thioalkalivibrio sulfidiphilus (strain HL-EbGR7)).